The chain runs to 238 residues: Partner of Y14 and mago (238 aa).

The interval 1–183 is disordered; the sequence is MTTYATDSQG…GADGHSDLSK (183 aa). Basic and acidic residues-rich tracts occupy residues 65–77 and 123–133; these read QKAR…EQRK and LEQKQKEEQKA. Residues 136 to 155 are compositionally biased toward low complexity; the sequence is RQQAQDQRNSKQQQSQNQSK. Residues 176 to 233 adopt a coiled-coil conformation; the sequence is DGHSDLSKKLRKLRKKIREIEVIEERLRASDGPRPDKDQIEKAKRKAEILKEIEELER.

It belongs to the pym family. As to quaternary structure, interacts (via N-terminus) with mago and tsu/Y14; the interaction is direct.

It localises to the cytoplasm. Its subcellular location is the nucleus. Its function is as follows. Regulator of the exon junction complex (EJC), a multiprotein complex that associates immediately upstream of the exon-exon junction on mRNAs and serves as a positional landmarks for the intron exon structure of genes and directs post-transcriptional processes in the cytoplasm such as mRNA export, nonsense-mediated mRNA decay (NMD) or translation. The protein is Partner of Y14 and mago of Culex quinquefasciatus (Southern house mosquito).